We begin with the raw amino-acid sequence, 444 residues long: Structure-specific endonuclease subunit SLX1 (444 aa).

Positions 23 to 105 (AFSCCYLLRS…QNTKVSRHAD (83 aa)) constitute a GIY-YIG domain. Residues 240–295 (CGVCKQRLILQHDIIAVCSHSSCHCAAHLSCLSSHFLKDKDSDSELVPREGTCPTC) form an SLX1-type zinc finger. The disordered stretch occupies residues 324–354 (RRQRAGTPKGQGLKSVRGRGHSEDENESDAL).

It belongs to the SLX1 family. Forms a heterodimer with SLX4. A divalent metal cation is required as a cofactor.

The protein resides in the nucleus. Catalytic subunit of the SLX1-SLX4 structure-specific endonuclease that resolves DNA secondary structures generated during DNA repair and recombination. Has endonuclease activity towards branched DNA substrates, introducing single-strand cuts in duplex DNA close to junctions with ss-DNA. In Paracoccidioides lutzii (strain ATCC MYA-826 / Pb01) (Paracoccidioides brasiliensis), this protein is Structure-specific endonuclease subunit SLX1.